The sequence spans 195 residues: ATP-dependent Clp protease proteolytic subunit (195 aa).

Catalysis depends on S101, which acts as the Nucleophile. H126 is a catalytic residue.

The protein belongs to the peptidase S14 family. As to quaternary structure, component of the chloroplastic Clp protease core complex.

The protein localises to the plastid. It is found in the chloroplast stroma. It carries out the reaction Hydrolysis of proteins to small peptides in the presence of ATP and magnesium. alpha-casein is the usual test substrate. In the absence of ATP, only oligopeptides shorter than five residues are hydrolyzed (such as succinyl-Leu-Tyr-|-NHMec, and Leu-Tyr-Leu-|-Tyr-Trp, in which cleavage of the -Tyr-|-Leu- and -Tyr-|-Trp bonds also occurs).. Functionally, cleaves peptides in various proteins in a process that requires ATP hydrolysis. Has a chymotrypsin-like activity. Plays a major role in the degradation of misfolded proteins. This is ATP-dependent Clp protease proteolytic subunit from Oltmannsiellopsis viridis (Marine flagellate).